Here is a 380-residue protein sequence, read N- to C-terminus: Beta sliding clamp (380 aa).

This sequence belongs to the beta sliding clamp family. As to quaternary structure, forms a ring-shaped head-to-tail homodimer around DNA which binds and tethers DNA polymerases and other proteins to the DNA. The DNA replisome complex has a single clamp-loading complex (3 tau and 1 each of delta, delta', psi and chi subunits) which binds 3 Pol III cores (1 core on the leading strand and 2 on the lagging strand) each with a beta sliding clamp dimer. Additional proteins in the replisome are other copies of gamma, psi and chi, Ssb, DNA helicase and RNA primase.

It localises to the cytoplasm. In terms of biological role, confers DNA tethering and processivity to DNA polymerases and other proteins. Acts as a clamp, forming a ring around DNA (a reaction catalyzed by the clamp-loading complex) which diffuses in an ATP-independent manner freely and bidirectionally along dsDNA. Initially characterized for its ability to contact the catalytic subunit of DNA polymerase III (Pol III), a complex, multichain enzyme responsible for most of the replicative synthesis in bacteria; Pol III exhibits 3'-5' exonuclease proofreading activity. The beta chain is required for initiation of replication as well as for processivity of DNA replication. This Mycoplasma genitalium (strain ATCC 33530 / DSM 19775 / NCTC 10195 / G37) (Mycoplasmoides genitalium) protein is Beta sliding clamp (dnaN).